We begin with the raw amino-acid sequence, 256 residues long: MDIFHAIILGIVEGLTEFLPVSSTGHLILVSELLGIKQDDFHKTFEISIQLGSILAVLALFRERLFSGVDIWLKLAVAFIPTGALGFLLYKHVKALFAPSTVAYALILGGIVFLVLEWLHKDKEYKINSVESIGYKEALAIGFFQALAMIPGTSRSGSTIVGGLILGLNRKVAAEFSFLLALPTMFIATGYDLYKNSHTLSIENLSALGVGFVVAFIFAMIAVKGFLKFISRFNFVPFGIYRIILGIIFLFYLDLI.

7 helical membrane passes run 1-21 (MDIFHAIILGIVEGLTEFLPV), 41-61 (FHKTFEISIQLGSILAVLALF), 69-89 (VDIWLKLAVAFIPTGALGFLL), 96-116 (LFAPSTVAYALILGGIVFLVL), 172-192 (VAAEFSFLLALPTMFIATGYD), 207-227 (ALGVGFVVAFIFAMIAVKGFL), and 233-253 (FNFVPFGIYRIILGIIFLFYL).

Belongs to the UppP family.

The protein localises to the cell inner membrane. The enzyme catalyses di-trans,octa-cis-undecaprenyl diphosphate + H2O = di-trans,octa-cis-undecaprenyl phosphate + phosphate + H(+). Functionally, catalyzes the dephosphorylation of undecaprenyl diphosphate (UPP). Confers resistance to bacitracin. The polypeptide is Undecaprenyl-diphosphatase (Wolinella succinogenes (strain ATCC 29543 / DSM 1740 / CCUG 13145 / JCM 31913 / LMG 7466 / NCTC 11488 / FDC 602W) (Vibrio succinogenes)).